The sequence spans 201 residues: Small ribosomal subunit protein uS4c (201 aa).

In terms of domain architecture, S4 RNA-binding spans 89 to 150; sequence MRLDNILFRL…KQRSKVLIQN (62 aa).

This sequence belongs to the universal ribosomal protein uS4 family. Part of the 30S ribosomal subunit. Contacts protein S5. The interaction surface between S4 and S5 is involved in control of translational fidelity.

The protein localises to the plastid. It is found in the chloroplast. Its function is as follows. One of the primary rRNA binding proteins, it binds directly to 16S rRNA where it nucleates assembly of the body of the 30S subunit. In terms of biological role, with S5 and S12 plays an important role in translational accuracy. The chain is Small ribosomal subunit protein uS4c (rps4) from Dioscorea elephantipes (Elephant's foot yam).